Here is a 129-residue protein sequence, read N- to C-terminus: UPF0325 protein PC1_0937 (129 aa).

It belongs to the UPF0325 family.

The sequence is that of UPF0325 protein PC1_0937 from Pectobacterium carotovorum subsp. carotovorum (strain PC1).